A 382-amino-acid chain; its full sequence is Deoxyhypusine synthase (382 aa).

NAD(+) is bound by residues 108–112, 134–136, Glu140, and Asp257; these read SNLIS and TAG. Residue 139–140 coordinates spermidine; sequence EE. Position 262 (Asp262) interacts with spermidine. Gly304 provides a ligand contact to NAD(+). Position 309 (His309) interacts with spermidine. Residue 329–330 participates in NAD(+) binding; that stretch reads TG. Spermidine contacts are provided by residues 335–337 and 344–350; these read GSD and EAVSWGK. Lys350 serves as the catalytic Nucleophile. An NAD(+)-binding site is contributed by 363–364; that stretch reads DV.

The protein belongs to the deoxyhypusine synthase family. It depends on NAD(+) as a cofactor.

It catalyses the reaction [eIF5A protein]-L-lysine + spermidine = [eIF5A protein]-deoxyhypusine + propane-1,3-diamine. Its pathway is protein modification; eIF5A hypusination. Functionally, catalyzes the NAD-dependent oxidative cleavage of spermidine and the subsequent transfer of the butylamine moiety of spermidine to the epsilon-amino group of a specific lysine residue of the eIF-5A precursor protein to form the intermediate deoxyhypusine residue. This is Deoxyhypusine synthase (DYS1) from Eremothecium gossypii (strain ATCC 10895 / CBS 109.51 / FGSC 9923 / NRRL Y-1056) (Yeast).